We begin with the raw amino-acid sequence, 132 residues long: Protein NrdI (132 aa).

This sequence belongs to the NrdI family.

Probably involved in ribonucleotide reductase function. In Bartonella tribocorum (strain CIP 105476 / IBS 506), this protein is Protein NrdI.